Here is a 423-residue protein sequence, read N- to C-terminus: COP9 signalosome complex subunit 3 (423 aa).

At alanine 2 the chain carries N-acetylalanine. The 169-residue stretch at 197–365 folds into the PCI domain; it reads NFERALYFYE…GMVSFHDNPE (169 aa). Positions 402 to 423 are disordered; it reads QFVQKSMGSQEDDSGNKPSSYS. Phosphoserine occurs at positions 407, 410, and 423.

The protein belongs to the CSN3 family. Component of the CSN complex, composed of COPS1/GPS1, COPS2, COPS3, COPS4, COPS5, COPS6, COPS7 (COPS7A or COPS7B), COPS8 and COPS9. In the complex, it probably interacts directly with COPS1, COPS4, COPS8 and COPS9. Interacts with CK2 and PKD. Interacts with the translation initiation factor EIF3S6 and IKBKG. Interacts with ERCC6. As to expression, widely expressed.

The protein resides in the cytoplasm. It localises to the nucleus. Component of the COP9 signalosome complex (CSN), a complex involved in various cellular and developmental processes. The CSN complex is an essential regulator of the ubiquitin (Ubl) conjugation pathway by mediating the deneddylation of the cullin subunits of SCF-type E3 ligase complexes, leading to decrease the Ubl ligase activity of SCF-type complexes such as SCF, CSA or DDB2. The complex is also involved in phosphorylation of p53/TP53, c-jun/JUN, IkappaBalpha/NFKBIA, ITPK1 and IRF8/ICSBP, possibly via its association with CK2 and PKD kinases. CSN-dependent phosphorylation of TP53 and JUN promotes and protects degradation by the Ubl system, respectively. Essential to maintain the survival of epiblast cells and thus the development of the postimplantation embryo. The polypeptide is COP9 signalosome complex subunit 3 (Cops3) (Mus musculus (Mouse)).